The sequence spans 1260 residues: Agglutinin-like protein 1 (1260 aa).

Residues 1–17 (MLQQFTLLFLYLSIASA) form the signal peptide. Cystine bridges form between cysteine 73-cysteine 150, cysteine 96-cysteine 112, cysteine 205-cysteine 298, and cysteine 227-cysteine 256. Tandem repeats lie at residues 433 to 468 (SPNP…IIRE), 469 to 504 (PPNH…IIRE), 505 to 540 (PPNP…IIRE), 541 to 576 (PPNP…IIRE), 577 to 612 (PPNH…IIRE), 613 to 648 (PPNH…IIRE), 649 to 684 (PPNP…LIRE), 685 to 720 (PPNH…LIRE), 721 to 756 (PPNH…IIRE), and 757 to 792 (PPNP…IIYE). The interval 433–792 (SPNPTVSTTE…GGTDTVIIYE (360 aa)) is 10 X 36 AA tandem repeats. N-linked (GlcNAc...) asparagine glycosylation occurs at asparagine 471. N-linked (GlcNAc...) asparagine glycosylation is found at asparagine 579 and asparagine 615. N-linked (GlcNAc...) asparagine glycosylation is found at asparagine 687 and asparagine 723. N-linked (GlcNAc...) asparagine glycans are attached at residues asparagine 820, asparagine 886, asparagine 918, and asparagine 973. Polar residues-rich tracts occupy residues 896 to 918 (PTAS…SSDN) and 964 to 979 (KVTF…GTHD). Disordered stretches follow at residues 896–924 (PTAS…KSGV) and 954–1226 (SIPS…SSSP). Positions 980–995 (SQSTSTEIEIVTTSST) are enriched in low complexity. The stretch at 983 to 1043 (TSTEIEIVTT…TTSQPTGDNG (61 aa)) is one 2-1 repeat. The 2 X 26 AA approximate repeats stretch occupies residues 983 to 1152 (TSTEIEIVTT…ATTQATNENG (170 aa)). The span at 1002–1062 (VSSNTDLTSE…PTVATSTLAS (61 aa)) shows a compositional bias: polar residues. Asparagine 1045 and asparagine 1068 each carry an N-linked (GlcNAc...) asparagine glycan. The segment covering 1073-1090 (HESASTSLKPSMGENSGL) has biased composition (polar residues). The span at 1091-1110 (TTSTEIEATTTSPTEAPSPA) shows a compositional bias: low complexity. A 2-2 repeat occupies 1092 to 1152 (TSTEIEATTT…ATTQATNENG (61 aa)). The segment covering 1111–1154 (VSSGTDVTTEPTDTREQPTTLSTTSKTNSESVATTQATNENGGK) has biased composition (polar residues). 2 stretches are compositionally biased toward low complexity: residues 1155–1176 (SPST…SANS) and 1197–1226 (SHST…SSSP).

It belongs to the ALS family. Post-translationally, N-glycosylated and O-glycosylated. In terms of processing, the GPI-anchor is attached to the protein in the endoplasmic reticulum and serves to target the protein to the cell surface. There, the glucosamine-inositol phospholipid moiety is cleaved off and the GPI-modified mannoprotein is covalently attached via its lipidless GPI glycan remnant to the 1,6-beta-glucan of the outer cell wall layer.

It is found in the cell membrane. Its subcellular location is the secreted. The protein resides in the cell wall. Functionally, major cell surface adhesion protein which mediates both yeast-to-host tissue adherence and yeast aggregation. Acts as a downstream effector of the EFG1 regulatory pathway. Required for rapamycin-induced aggregation of C.albicans. Binds glycans and mediates adherence to endothelial and epithelial cells, thereby playing an important role in the pathogenesis of C.albicans infections. The polypeptide is Agglutinin-like protein 1 (ALS1) (Candida albicans (Yeast)).